The following is a 311-amino-acid chain: GTP cyclohydrolase FolE2 (311 aa).

The protein belongs to the GTP cyclohydrolase IV family.

It catalyses the reaction GTP + H2O = 7,8-dihydroneopterin 3'-triphosphate + formate + H(+). It participates in cofactor biosynthesis; 7,8-dihydroneopterin triphosphate biosynthesis; 7,8-dihydroneopterin triphosphate from GTP: step 1/1. Converts GTP to 7,8-dihydroneopterin triphosphate. This chain is GTP cyclohydrolase FolE2, found in Hydrogenovibrio crunogenus (strain DSM 25203 / XCL-2) (Thiomicrospira crunogena).